Consider the following 639-residue polypeptide: E3 ubiquitin-protein ligase HEL2 (639 aa).

Residues 1 to 55 (MSESVKENVTPTRNFRRTQGPQNNTKPHNDRKNFRRKQKKNNLSAEPNLTTSSAD) are disordered. N-acetylserine is present on Ser-2. 2 stretches are compositionally biased toward polar residues: residues 7-26 (ENVTPTRNFRRTQGPQNNTK) and 43-54 (LSAEPNLTTSSA). At Thr-57 the chain carries Phosphothreonine. The RING-type zinc-finger motif lies at 64 to 104 (CVICARKLTYVSLTPCHHKTCHICGFRQRALYNKKSCLICR). Residues 222–292 (PMCAFCSGKR…QTCLDNKFVV (71 aa)) enclose the LIM zinc-binding domain. Over residues 343-354 (SISSLPGSSSGS) the composition is skewed to low complexity. Disordered stretches follow at residues 343-367 (SISSLPGSSSGSRTDVRSASSPEES) and 550-631 (LESK…GKQK). Ser-354 carries the phosphoserine modification.

Belongs to the ZNF598/HEL2 family. In terms of assembly, interacts with the E2 ubiquitin-conjugating enzyme UBC4. Interacts with histones H3 and H4.

The protein resides in the cytoplasm. It catalyses the reaction S-ubiquitinyl-[E2 ubiquitin-conjugating enzyme]-L-cysteine + [acceptor protein]-L-lysine = [E2 ubiquitin-conjugating enzyme]-L-cysteine + N(6)-ubiquitinyl-[acceptor protein]-L-lysine.. The protein operates within protein modification; protein ubiquitination. Functionally, E3 ubiquitin-protein ligase that plays a key role in the ribosome quality control (RQC), a pathway that takes place when a ribosome has stalled during translation, leading to degradation of nascent peptide chains. HEL2 is activated when ribosomes are stalled within an mRNA following translation of prematurely polyadenylated mRNAs. Acts as a ribosome collision sensor: specifically recognizes and binds collided ribosome and ubiquitinates the 40S ribosomal proteins RPS20/uS10 and RPS3/uS3. Catalyzes 'Lys-63'-linked polyubiquitination of RPS20/uS10, promoting recruitment of the RQT (ribosome quality control trigger) complex, which drives the disassembly of stalled ribosomes, followed by degradation of nascent peptides. HEL2 also acts as an activator of the No-Go decay (NGD) pathway by mediating polyubiquitination of monoubiquitinated RPS3/uS3 and RPS7/es7: RPS3/uS3 and RPS7/es7 are first monoubiquitinated by MAG2 and MOT2/NOT4, respectively, and HEL2 mediates formation of 'Lys-63'-linked polyubiquitin chains on monoubiquitin, leading to activation of the NGD pathway in a CUE2-mediated endonucleolytic cleavage. Polyubiquitination of RPS3/uS3 also triggers degradation of non-functional 18S rRNA. The RQC pathway and the integrated stress response (ISR) antagonize each other: HEL2 prevents the activation of GCN2, while GCN2 suppresses RQC activation. The RQC pathway functions as a preventive quality control in the secretory pathway: HEL2 binds preferentially to the pre-engaged secretory ribosome-nascent chain complexes and prevents mistargeting of secretory proteins into mitochondria. Independently of its role in RQC, also involved in the polyubiquitination and proteasomal-degradation of excess histone proteins. The chain is E3 ubiquitin-protein ligase HEL2 from Saccharomyces cerevisiae (strain ATCC 204508 / S288c) (Baker's yeast).